Reading from the N-terminus, the 304-residue chain is Acetaldehyde dehydrogenase 2 (304 aa).

The active-site Acyl-thioester intermediate is Cys131. Residues 162-170 (SAGPGTRKN) and Asn273 each bind NAD(+).

This sequence belongs to the acetaldehyde dehydrogenase family.

It carries out the reaction acetaldehyde + NAD(+) + CoA = acetyl-CoA + NADH + H(+). This is Acetaldehyde dehydrogenase 2 from Dechloromonas aromatica (strain RCB).